The following is a 78-amino-acid chain: Protein SlyX homolog (78 aa).

Belongs to the SlyX family.

This is Protein SlyX homolog from Xanthomonas campestris pv. campestris (strain 8004).